The sequence spans 157 residues: SsrA-binding protein (157 aa).

A disordered region spans residues 126-157 (GLGKGKQAHDKREAVKERDWQRDRARLMRDRG). The segment covering 132-157 (QAHDKREAVKERDWQRDRARLMRDRG) has biased composition (basic and acidic residues).

It belongs to the SmpB family.

It is found in the cytoplasm. In terms of biological role, required for rescue of stalled ribosomes mediated by trans-translation. Binds to transfer-messenger RNA (tmRNA), required for stable association of tmRNA with ribosomes. tmRNA and SmpB together mimic tRNA shape, replacing the anticodon stem-loop with SmpB. tmRNA is encoded by the ssrA gene; the 2 termini fold to resemble tRNA(Ala) and it encodes a 'tag peptide', a short internal open reading frame. During trans-translation Ala-aminoacylated tmRNA acts like a tRNA, entering the A-site of stalled ribosomes, displacing the stalled mRNA. The ribosome then switches to translate the ORF on the tmRNA; the nascent peptide is terminated with the 'tag peptide' encoded by the tmRNA and targeted for degradation. The ribosome is freed to recommence translation, which seems to be the essential function of trans-translation. This is SsrA-binding protein from Methylobacterium radiotolerans (strain ATCC 27329 / DSM 1819 / JCM 2831 / NBRC 15690 / NCIMB 10815 / 0-1).